A 428-amino-acid chain; its full sequence is Probable protein phosphatase 2C 12 (428 aa).

In terms of domain architecture, PPM-type phosphatase spans K24–I293. Residues D69, G70, D245, and D284 each coordinate Mn(2+). The interval A301–K331 is disordered.

The protein belongs to the PP2C family. Mg(2+) is required as a cofactor. It depends on Mn(2+) as a cofactor.

It carries out the reaction O-phospho-L-seryl-[protein] + H2O = L-seryl-[protein] + phosphate. It catalyses the reaction O-phospho-L-threonyl-[protein] + H2O = L-threonyl-[protein] + phosphate. In Arabidopsis thaliana (Mouse-ear cress), this protein is Probable protein phosphatase 2C 12.